We begin with the raw amino-acid sequence, 242 residues long: Probable transcriptional regulatory protein NMB1648 (242 aa).

The protein belongs to the TACO1 family.

It is found in the cytoplasm. This chain is Probable transcriptional regulatory protein NMB1648, found in Neisseria meningitidis serogroup B (strain ATCC BAA-335 / MC58).